The sequence spans 404 residues: Intracellular hyaluronan-binding protein 4.L (404 aa).

3 disordered regions span residues 1–21, 51–288, and 359–379; these read MRLD…MQDN, LTRR…QEMS, and LTRP…REEA. A compositionally biased stretch (polar residues) spans 8-19; sequence ETPSSPVNTEMQ. Composition is skewed to basic and acidic residues over residues 71 to 81, 145 to 159, and 165 to 184; these read GKKESQKDRKA, KVDR…REVR, and RSNE…DKQM. Positions 188 to 200 are enriched in gly residues; the sequence is GGRGGMRGRGRGG. Composition is skewed to basic and acidic residues over residues 205–233 and 270–281; these read TEND…DKRG and EEHAKVPEEKNE.

Belongs to the SERBP1-HABP4 family. Associates with ribosomes; promoting ribosome stabilization. Interacts with eef2/eEF2; promoting ribosome stabilization.

It is found in the nucleus. The protein localises to the cytoplasm. It localises to the stress granule. The protein resides in the nucleolus. Its subcellular location is the nucleus speckle. It is found in the cajal body. Ribosome-binding protein that promotes ribosome hibernation, a process during which ribosomes are stabilized in an inactive state and preserved from proteasomal degradation. Acts via its association with eef2/eEF2 factor at the A-site of the ribosome, promoting ribosome stabilization in an inactive state compatible with storage. Plays a key role in ribosome hibernation in the mature egg by promoting ribosome stabilization. Ribosomes, which are produced in large quantities during oogenesis, are stored and translationally repressed in the egg and early embryo. The polypeptide is Intracellular hyaluronan-binding protein 4.L (Xenopus laevis (African clawed frog)).